The sequence spans 78 residues: Large ribosomal subunit protein bL28B (78 aa).

The interval 1–29 (MSAHCQVTGRKPGFGNTVSHSHRRSRRRW) is disordered. The span at 20–29 (HSHRRSRRRW) shows a compositional bias: basic residues.

The protein belongs to the bacterial ribosomal protein bL28 family.

This Mycobacterium bovis (strain ATCC BAA-935 / AF2122/97) protein is Large ribosomal subunit protein bL28B (rpmB2).